Consider the following 89-residue polypeptide: Small ribosomal subunit protein uS15 (89 aa).

This sequence belongs to the universal ribosomal protein uS15 family. In terms of assembly, part of the 30S ribosomal subunit. Forms a bridge to the 50S subunit in the 70S ribosome, contacting the 23S rRNA.

In terms of biological role, one of the primary rRNA binding proteins, it binds directly to 16S rRNA where it helps nucleate assembly of the platform of the 30S subunit by binding and bridging several RNA helices of the 16S rRNA. Forms an intersubunit bridge (bridge B4) with the 23S rRNA of the 50S subunit in the ribosome. This is Small ribosomal subunit protein uS15 from Dictyoglomus turgidum (strain DSM 6724 / Z-1310).